The chain runs to 280 residues: Probable endonuclease 4 (280 aa).

The Zn(2+) site is built by H77, H117, E148, D180, H183, H215, D228, H230, and E259.

The protein belongs to the AP endonuclease 2 family. Zn(2+) serves as cofactor.

The enzyme catalyses Endonucleolytic cleavage to 5'-phosphooligonucleotide end-products.. Functionally, endonuclease IV plays a role in DNA repair. It cleaves phosphodiester bonds at apurinic or apyrimidinic (AP) sites, generating a 3'-hydroxyl group and a 5'-terminal sugar phosphate. The protein is Probable endonuclease 4 of Thermoplasma volcanium (strain ATCC 51530 / DSM 4299 / JCM 9571 / NBRC 15438 / GSS1).